The sequence spans 484 residues: UDP-N-acetylmuramate--L-alanine ligase (484 aa).

125–131 is an ATP binding site; that stretch reads GTHGKTT.

Belongs to the MurCDEF family.

Its subcellular location is the cytoplasm. It carries out the reaction UDP-N-acetyl-alpha-D-muramate + L-alanine + ATP = UDP-N-acetyl-alpha-D-muramoyl-L-alanine + ADP + phosphate + H(+). The protein operates within cell wall biogenesis; peptidoglycan biosynthesis. Its function is as follows. Cell wall formation. The protein is UDP-N-acetylmuramate--L-alanine ligase of Buchnera aphidicola subsp. Acyrthosiphon pisum (strain 5A).